The following is a 148-amino-acid chain: uncharacterized protein (148 aa).

Residues 22–40 (YFLSLTVVISIIHLFTTCV) form a helical membrane-spanning segment. The histidine-rich stretch occupies residues 43 to 141 (HNHSTHFPYL…YYPISRHYLH (99 aa)).

The protein localises to the host membrane. This is an uncharacterized protein from African swine fever virus (strain Badajoz 1971 Vero-adapted) (Ba71V).